A 201-amino-acid polypeptide reads, in one-letter code: Two-component response regulator ORR9 (201 aa).

The Response regulatory domain maps to 10–142; sequence HVLAVDDSLP…DMSKLKPHIL (133 aa). A 4-aspartylphosphate modification is found at aspartate 75. The segment at 149 to 201 is disordered; the sequence is HYQQEQNLQSNSESNNSSNPTSENSSSSTSSNSHKRKAVDEEILPHTIRPRHS. Over residues 158-180 the composition is skewed to low complexity; it reads SNSESNNSSNPTSENSSSSTSSN.

This sequence belongs to the ARR family. Type-A subfamily. Two-component system major event consists of a His-to-Asp phosphorelay between a sensor histidine kinase (HK) and a response regulator (RR). In plants, the His-to-Asp phosphorelay involves an additional intermediate named Histidine-containing phosphotransfer protein (HPt). This multistep phosphorelay consists of a His-Asp-His-Asp sequential transfer of a phosphate group between first a His and an Asp of the HK protein, followed by the transfer to a conserved His of the HPt protein and finally the transfer to an Asp in the receiver domain of the RR protein.

In terms of biological role, functions as a response regulator involved in His-to-Asp phosphorelay signal transduction system. Phosphorylation of the Asp residue in the receiver domain activates the ability of the protein to promote the transcription of target genes. Type-A response regulators seem to act as negative regulators of the cytokinin signaling. The protein is Two-component response regulator ORR9 of Oryza sativa subsp. japonica (Rice).